The primary structure comprises 770 residues: uncharacterized protein (770 aa).

Residues 736-770 (GSGQPGQSPANVGDDPNRMVQSSASQTQIGHVFNN) are disordered. Over residues 754-770 (MVQSSASQTQIGHVFNN) the composition is skewed to polar residues.

This is an uncharacterized protein from Caenorhabditis elegans.